Reading from the N-terminus, the 441-residue chain is Deoxyguanosinetriphosphate triphosphohydrolase-like protein 1 (441 aa).

One can recognise an HD domain in the interval 62–255 (RLTHSLEAAQ…MELADDIAYG (194 aa)).

It belongs to the dGTPase family. Type 2 subfamily.

The chain is Deoxyguanosinetriphosphate triphosphohydrolase-like protein 1 from Vibrio cholerae serotype O1 (strain ATCC 39315 / El Tor Inaba N16961).